The primary structure comprises 1490 residues: WD repeat-containing protein 7 (1490 aa).

WD repeat units follow at residues 17 to 56, 62 to 104, 156 to 199, 324 to 366, 404 to 443, 462 to 507, and 558 to 597; these read APTHCISAVLLTDDGATIVTGCHDGQICLWDLSVELQINP, GHTA…CIEF, ISPD…SDMQ, LICP…DKQG, NEPLKVTASVYIPAHGRLVCGREDGSIVIVPATQTAIVQL, GHRN…MKHI, and RHLFPIQVIKWRPSDDYLVVGCSDGSVYVWQMDTGALDRC. Disordered stretches follow at residues 761–783 and 911–945; these read DEEEDEEIMRQRREESDPEYRSS and GDHMKKGPTRPPRPSTPDLSKARGSPPTSSNIVQG. Basic and acidic residues predominate over residues 768 to 782; that stretch reads IMRQRREESDPEYRS. Phosphoserine is present on Ser935. The segment covering 936-945 has biased composition (polar residues); the sequence is PPTSSNIVQG. WD repeat units lie at residues 1351–1390 and 1392–1432; these read PAICRFYMVSYYERNHRIAVGARHGSVALYDIRTGKCQTI and GHKG…LGSI. At Ser1456 the chain carries Phosphoserine.

The chain is WD repeat-containing protein 7 (WDR7) from Homo sapiens (Human).